We begin with the raw amino-acid sequence, 194 residues long: Small ribosomal subunit protein uS7 (194 aa).

It belongs to the universal ribosomal protein uS7 family. In terms of assembly, part of the 30S ribosomal subunit.

Its function is as follows. One of the primary rRNA binding proteins, it binds directly to 16S rRNA where it nucleates assembly of the head domain of the 30S subunit. Is located at the subunit interface close to the decoding center. This chain is Small ribosomal subunit protein uS7, found in Methanococcus vannielii (strain ATCC 35089 / DSM 1224 / JCM 13029 / OCM 148 / SB).